Reading from the N-terminus, the 391-residue chain is 3-ketoacyl-CoA thiolase (391 aa).

The Acyl-thioester intermediate role is filled by cysteine 95. Residues histidine 347 and cysteine 377 each act as proton acceptor in the active site.

The protein belongs to the thiolase-like superfamily. Thiolase family. As to quaternary structure, heterotetramer of two alpha chains (FadB) and two beta chains (FadA).

It is found in the cytoplasm. The enzyme catalyses an acyl-CoA + acetyl-CoA = a 3-oxoacyl-CoA + CoA. It participates in lipid metabolism; fatty acid beta-oxidation. Functionally, catalyzes the final step of fatty acid oxidation in which acetyl-CoA is released and the CoA ester of a fatty acid two carbons shorter is formed. The polypeptide is 3-ketoacyl-CoA thiolase (Pseudomonas syringae pv. syringae (strain B728a)).